The sequence spans 374 residues: Pectate lyase 1 (374 aa).

The signal sequence occupies residues 1-22 (MKYLLPSAAAGLLLLAAQPTMA). A disulfide bridge links cysteine 93 with cysteine 176. Positions 150, 152, 187, and 191 each coordinate Ca(2+). Arginine 239 is a catalytic residue. Residues cysteine 350 and cysteine 373 are joined by a disulfide bond.

This sequence belongs to the polysaccharide lyase 1 family. PLADES subfamily. Ca(2+) serves as cofactor.

It localises to the secreted. The catalysed reaction is Eliminative cleavage of (1-&gt;4)-alpha-D-galacturonan to give oligosaccharides with 4-deoxy-alpha-D-galact-4-enuronosyl groups at their non-reducing ends.. Its pathway is glycan metabolism; pectin degradation; 2-dehydro-3-deoxy-D-gluconate from pectin: step 2/5. Its function is as follows. Involved in maceration and soft-rotting of plant tissue. The polypeptide is Pectate lyase 1 (pel1) (Pectobacterium atrosepticum (strain SCRI 1043 / ATCC BAA-672) (Erwinia carotovora subsp. atroseptica)).